A 200-amino-acid polypeptide reads, in one-letter code: Large ribosomal subunit protein bL25 (200 aa).

This sequence belongs to the bacterial ribosomal protein bL25 family. CTC subfamily. As to quaternary structure, part of the 50S ribosomal subunit; part of the 5S rRNA/L5/L18/L25 subcomplex. Contacts the 5S rRNA. Binds to the 5S rRNA independently of L5 and L18.

Functionally, this is one of the proteins that binds to the 5S RNA in the ribosome where it forms part of the central protuberance. This chain is Large ribosomal subunit protein bL25, found in Caldicellulosiruptor bescii (strain ATCC BAA-1888 / DSM 6725 / KCTC 15123 / Z-1320) (Anaerocellum thermophilum).